The sequence spans 463 residues: Bifunctional protein GlmU (463 aa).

Residues 1 to 228 (MEQALSIVVL…PAEVQGVNDR (228 aa)) are pyrophosphorylase. UDP-N-acetyl-alpha-D-glucosamine-binding positions include 10–13 (LAAG), K24, Q75, 80–81 (GT), 102–104 (YGD), G138, E153, N168, and N226. A Mg(2+)-binding site is contributed by D104. N226 contributes to the Mg(2+) binding site. Residues 229 to 249 (VQLAAAERVWQRRQAEDWMRA) form a linker region. Residues 250–463 (GVTILDPDRF…RPDRGEGSDA (214 aa)) form an N-acetyltransferase region. R332 and K350 together coordinate UDP-N-acetyl-alpha-D-glucosamine. Catalysis depends on H362, which acts as the Proton acceptor. UDP-N-acetyl-alpha-D-glucosamine-binding residues include Y365 and N376. Residues A379, 385 to 386 (NY), S404, A422, and R439 each bind acetyl-CoA. The disordered stretch occupies residues 437–463 (VARSAQRSIHGWRRPGQRPDRGEGSDA). Residues 453–463 (QRPDRGEGSDA) show a composition bias toward basic and acidic residues.

The protein in the N-terminal section; belongs to the N-acetylglucosamine-1-phosphate uridyltransferase family. This sequence in the C-terminal section; belongs to the transferase hexapeptide repeat family. Homotrimer. Mg(2+) is required as a cofactor.

It localises to the cytoplasm. The catalysed reaction is alpha-D-glucosamine 1-phosphate + acetyl-CoA = N-acetyl-alpha-D-glucosamine 1-phosphate + CoA + H(+). The enzyme catalyses N-acetyl-alpha-D-glucosamine 1-phosphate + UTP + H(+) = UDP-N-acetyl-alpha-D-glucosamine + diphosphate. It functions in the pathway nucleotide-sugar biosynthesis; UDP-N-acetyl-alpha-D-glucosamine biosynthesis; N-acetyl-alpha-D-glucosamine 1-phosphate from alpha-D-glucosamine 6-phosphate (route II): step 2/2. It participates in nucleotide-sugar biosynthesis; UDP-N-acetyl-alpha-D-glucosamine biosynthesis; UDP-N-acetyl-alpha-D-glucosamine from N-acetyl-alpha-D-glucosamine 1-phosphate: step 1/1. Its pathway is bacterial outer membrane biogenesis; LPS lipid A biosynthesis. Its function is as follows. Catalyzes the last two sequential reactions in the de novo biosynthetic pathway for UDP-N-acetylglucosamine (UDP-GlcNAc). The C-terminal domain catalyzes the transfer of acetyl group from acetyl coenzyme A to glucosamine-1-phosphate (GlcN-1-P) to produce N-acetylglucosamine-1-phosphate (GlcNAc-1-P), which is converted into UDP-GlcNAc by the transfer of uridine 5-monophosphate (from uridine 5-triphosphate), a reaction catalyzed by the N-terminal domain. This chain is Bifunctional protein GlmU, found in Alkalilimnicola ehrlichii (strain ATCC BAA-1101 / DSM 17681 / MLHE-1).